The following is a 419-amino-acid chain: CinA-like protein (419 aa).

This sequence belongs to the CinA family.

This is CinA-like protein from Synechococcus sp. (strain CC9902).